A 528-amino-acid chain; its full sequence is DNA primase large subunit (528 aa).

The interval 210–239 is H-T-H-like motif; the sequence is NEEHQRKQYFQQEKFIKLPFENVIELVGNR. Residues Cys336, Cys417, Cys434, and Cys474 each coordinate [4Fe-4S] cluster.

The protein belongs to the eukaryotic-type primase large subunit family. In terms of assembly, DNA polymerase alpha:primase is a four subunit enzyme complex, which is assembled throughout the cell cycle, and consists of the two DNA polymerase subunits A POL1 and B POL12, and the DNA primase large PRI2 and small PRI1 subunits. Interacts with MCM10. Requires [4Fe-4S] cluster as cofactor.

DNA primase is the polymerase that synthesizes small RNA primers for the Okazaki fragments made during discontinuous DNA replication. In a complex with DNA polymerase alpha (DNA polymerase alpha:primase) constitutes a replicative polymerase. Both primase components participate in formation of the active center, but the ATP-binding site is exclusively located on p48. This is DNA primase large subunit (PRI2) from Saccharomyces cerevisiae (strain ATCC 204508 / S288c) (Baker's yeast).